The following is a 372-amino-acid chain: Protein zntB (372 aa).

Helical transmembrane passes span 15 to 35 (LIMCFLSGLSTAIGGLYVIFI), 42 to 62 (LLGHLLSFSSGVMIYISFMDL), and 70 to 90 (IGFYNANIWFFVGIIFFAVIL). A disordered region spans residues 99 to 166 (ESGDSNHAHS…IAKSKNKKKS (68 aa)). Basic and acidic residues predominate over residues 114 to 124 (IEKHSSEKKEV). A coiled-coil region spans residues 133 to 167 (NGKDKKQKQQKQKQQKQQQQQKQNIAKSKNKKKSK). Positions 137–146 (KKQKQQKQKQ) are enriched in basic residues. The span at 147 to 159 (QKQQQQQKQNIAK) shows a compositional bias: low complexity. The next 5 helical transmembrane spans lie at 170–192 (YLNSVGIATAIGVSLHNFPEGVA), 207–229 (LMLAIAAHNIPEGMAVAAPIFSA), 237–257 (FKYCLYSGLCEPVGAIIFGLI), 271–291 (LAAVAGIMVFMVIKELLPAAF), and 301–321 (FSNIIGMIFFFFSIHFLHSML). Residues 328-372 (AGDGGHGHSHGGHGHSHGHGHSHGGHSHDSQHVESPQSSSFNAFA) are disordered. Residues 334 to 352 (GHSHGGHGHSHGHGHSHGG) are compositionally biased toward basic residues. Residues 360 to 372 (VESPQSSSFNAFA) show a composition bias toward polar residues.

The protein belongs to the ZIP transporter (TC 2.A.5) family. ZupT subfamily.

Its subcellular location is the membrane. Its function is as follows. May transport divalent cations. May participate, with dstA, in the regulation of the differentiation of stalk cells during development. This is Protein zntB (zntB) from Dictyostelium discoideum (Social amoeba).